Reading from the N-terminus, the 338-residue chain is UDP-glucose 4-epimerase (338 aa).

NAD(+)-binding positions include 11–12 (YI), 31–36 (DNLCNS), 58–59 (DI), 80–84 (FAGLK), Asn99, Ser124, Tyr149, Lys153, and Phe178. The substrate site is built by Ser124 and Tyr149. Residue Tyr149 is the Proton acceptor of the active site. Substrate is bound by residues Asn179, 199–200 (NL), 216–218 (AVF), Arg231, 292–295 (RDGD), and Tyr299.

The protein belongs to the NAD(P)-dependent epimerase/dehydratase family. In terms of assembly, homodimer. Requires NAD(+) as cofactor.

The enzyme catalyses UDP-alpha-D-glucose = UDP-alpha-D-galactose. Its pathway is carbohydrate metabolism; galactose metabolism. Involved in the metabolism of galactose. Catalyzes the conversion of UDP-galactose (UDP-Gal) to UDP-glucose (UDP-Glc) through a mechanism involving the transient reduction of NAD. This Salmonella typhimurium (strain LT2 / SGSC1412 / ATCC 700720) protein is UDP-glucose 4-epimerase (galE).